Consider the following 694-residue polypeptide: DNA-binding protein RFX2 (694 aa).

Residues 174–249 (HLQWLLDNYE…YHYYGIRLKP (76 aa)) constitute a DNA-binding region (RFX-type winged-helix). 2 disordered regions span residues 267-310 (QQPI…QHHQ) and 658-694 (KDDVSELGSDTEGDPHISGQPPVKRERVELNHSMQEM). Residues 289–299 (PANSSQHASPE) are compositionally biased toward polar residues. The segment covering 300–310 (QSVAAQSQHHQ) has biased composition (low complexity).

Belongs to the RFX family. In terms of assembly, homodimer. Heterodimer; heterodimerizes with other rfx proteins. In terms of tissue distribution, preferentially expressed in ciliated tissues, such as neural tube, gastrocoel roof plate, epidermal multiciliated cells, otic vesicles and kidneys.

Its subcellular location is the nucleus. The protein localises to the cytoplasm. Transcription factor that acts as a key regulator of ciliogenesis. Specifically regulates expression of genes required for cilium assembly and function. Recognizes and binds the X-box, a regulatory motif with DNA sequence 5'-GTNRCC(0-3N)RGYAAC-3' present on promoters. Required for neural tube closure and neural ciliogenesis. This Xenopus laevis (African clawed frog) protein is DNA-binding protein RFX2 (rfx2).